The primary structure comprises 251 residues: Intermembrane phospholipid transport system lipoprotein MlaA (251 aa).

Positions 1–17 (MKLRLSALALGTTLLVG) are cleaved as a signal peptide. Residue Cys18 is the site of N-palmitoyl cysteine attachment. A lipid anchor (S-diacylglycerol cysteine) is attached at Cys18. The interval 228-251 (GELKPQENPNAQAIQDDLKDIDSE) is disordered.

The protein belongs to the MlaA family.

It localises to the cell outer membrane. Its function is as follows. Involved in a phospholipid transport pathway that maintains lipid asymmetry in the outer membrane by retrograde trafficking of phospholipids from the outer membrane to the inner membrane. Required for intercellular spreading of S.flexneri. This Shigella flexneri protein is Intermembrane phospholipid transport system lipoprotein MlaA.